Reading from the N-terminus, the 520-residue chain is Arginine biosynthesis bifunctional protein ArgJ, chloroplastic (520 aa).

6 residues coordinate substrate: Thr264, Lys290, Thr301, Glu388, Asn515, and Thr520. Thr301 serves as the catalytic Nucleophile.

This sequence belongs to the ArgJ family. As to quaternary structure, heterodimer of an alpha and a beta chain.

It is found in the plastid. It localises to the chloroplast. It catalyses the reaction N(2)-acetyl-L-ornithine + L-glutamate = N-acetyl-L-glutamate + L-ornithine. The enzyme catalyses L-glutamate + acetyl-CoA = N-acetyl-L-glutamate + CoA + H(+). Its pathway is amino-acid biosynthesis; L-arginine biosynthesis; L-ornithine and N-acetyl-L-glutamate from L-glutamate and N(2)-acetyl-L-ornithine (cyclic): step 1/1. The protein operates within amino-acid biosynthesis; L-arginine biosynthesis; N(2)-acetyl-L-ornithine from L-glutamate: step 1/4. Its function is as follows. Catalyzes two activities which are involved in the cyclic version of arginine biosynthesis: the synthesis of acetylglutamate from glutamate and acetyl-CoA, and of ornithine by transacetylation between acetylornithine and glutamate. The sequence is that of Arginine biosynthesis bifunctional protein ArgJ, chloroplastic from Physcomitrium patens (Spreading-leaved earth moss).